A 118-amino-acid chain; its full sequence is Putative pterin-4-alpha-carbinolamine dehydratase (118 aa).

This sequence belongs to the pterin-4-alpha-carbinolamine dehydratase family.

It carries out the reaction (4aS,6R)-4a-hydroxy-L-erythro-5,6,7,8-tetrahydrobiopterin = (6R)-L-erythro-6,7-dihydrobiopterin + H2O. The polypeptide is Putative pterin-4-alpha-carbinolamine dehydratase (Pseudomonas aeruginosa (strain LESB58)).